Consider the following 571-residue polypeptide: Septation ring formation regulator EzrA (571 aa).

The Extracellular segment spans residues 1-3 (MYY). The helical transmembrane segment at 4 to 22 (MLIGFIIVVIAVISAGYIL) threads the bilayer. Residues 23–571 (KRKHYQRINE…ESKVSVDDIE (549 aa)) are Cytoplasmic-facing. Coiled-coil stretches lie at residues 170-215 (EAKL…QMER), 248-299 (LAQM…TLEH), 326-374 (DALA…ASGE), 400-437 (NFAE…ERER), and 478-529 (RIAE…ENHF).

Belongs to the EzrA family.

It localises to the cell membrane. In terms of biological role, negative regulator of FtsZ ring formation; modulates the frequency and position of FtsZ ring formation. Inhibits FtsZ ring formation at polar sites. Interacts either with FtsZ or with one of its binding partners to promote depolymerization. In Listeria innocua serovar 6a (strain ATCC BAA-680 / CLIP 11262), this protein is Septation ring formation regulator EzrA.